An 807-amino-acid chain; its full sequence is MSGWPRIYYKLLNLPLSILVKSKSIPADPAPELGLDTSRPIMYVLPYNSKADLLTLRAQCLAHDLPDPLEPLEIDGMLLPRYVFIHGGPRVFTYYTPKEESIKLFHDYLDLHRSNPNLDVQMVPVSVMFGRAPGREKGEVNPPLRMLNGVQKFFAVLWLGRDSFVRFSPSVSLRRMADEHGTDKTIAQKLARVARMHFARQRLAAVGPRLPARQDLFNKLLASRAIAKAVEDEAHSKKISHEKAQQNAIALMEEIAANFSYEMIRLTDRILGFTWNRLYQGINVHNAERVRQLAHDGHELVYVPCHRSHMDYLLLSYVLYHQGLVPPHIAAGINLNFWPAGPIFRRLGAFFIRRTFKGNKLYSTVFREYLGELFSRGYSVEYFVEGGRSRTGRLLDPKTGTLSMTIQAMLRGGTRPITLIPIYIGYEHVMEVGTYAKELRGATKEKESLPQMLRGLSKLRNLGQGYVNFGEPMPLMTYLNQHVPDWRESIDPIEAVRPAWLTPTVNNIAADLMVRINNAGAANAMNLCCTALLASRQRSLTREQLTEQLNCYLDLMRNVPYSTDSTVPSASASELIDHALQMNKFEVEKDTIGDIIILPREQAVLMTYYRNNIAHMLVLPSLMAAIVTQHRHISRDVLMEHVNVLYPMLKAELFLRWDRDELPDVIDALANEMQRQGLITLQDDELHINPSHSRTLQLLAAGARETLQRYAITFWLLSANPSINRGTLEKESRTVAQRLSVLHGINAPEFFDKAVFSSLVLTLRDEGYISDSGDAEPAETMKVYQLLAELITSDVRLTIESATQGEG.

The HXXXXD motif signature appears at 305–310 (CHRSHM).

Belongs to the GPAT/DAPAT family.

It is found in the cell inner membrane. It carries out the reaction sn-glycerol 3-phosphate + an acyl-CoA = a 1-acyl-sn-glycero-3-phosphate + CoA. It functions in the pathway phospholipid metabolism; CDP-diacylglycerol biosynthesis; CDP-diacylglycerol from sn-glycerol 3-phosphate: step 1/3. The polypeptide is Glycerol-3-phosphate acyltransferase (Shigella boydii serotype 18 (strain CDC 3083-94 / BS512)).